The following is a 437-amino-acid chain: Enolase (437 aa).

Residue Gln162 participates in (2R)-2-phosphoglycerate binding. Glu204 (proton donor) is an active-site residue. Residues Asp251, Glu297, and Asp324 each contribute to the Mg(2+) site. (2R)-2-phosphoglycerate-binding residues include Lys349, Arg378, Ser379, and Lys400. The active-site Proton acceptor is Lys349.

It belongs to the enolase family. Mg(2+) is required as a cofactor.

It localises to the cytoplasm. The protein localises to the secreted. The protein resides in the cell surface. The enzyme catalyses (2R)-2-phosphoglycerate = phosphoenolpyruvate + H2O. Its pathway is carbohydrate degradation; glycolysis; pyruvate from D-glyceraldehyde 3-phosphate: step 4/5. Functionally, catalyzes the reversible conversion of 2-phosphoglycerate (2-PG) into phosphoenolpyruvate (PEP). It is essential for the degradation of carbohydrates via glycolysis. The polypeptide is Enolase (Chlorobium phaeovibrioides (strain DSM 265 / 1930) (Prosthecochloris vibrioformis (strain DSM 265))).